Here is a 536-residue protein sequence, read N- to C-terminus: CTP synthase (536 aa).

The tract at residues 1–267 (MSKFVFVTGG…CKETLNYLEL (267 aa)) is amidoligase domain. Ser13 is a CTP binding site. Residue Ser13 coordinates UTP. Residues 14–19 (SIGKGI) and Asp71 each bind ATP. Residues Asp71 and Glu141 each coordinate Mg(2+). CTP contacts are provided by residues 148–150 (DIE), 188–193 (KTKPTQ), and Lys224. UTP-binding positions include 188-193 (KTKPTQ) and Lys224. The region spanning 292–534 (KVALVGKYIE…IKASQDKLTQ (243 aa)) is the Glutamine amidotransferase type-1 domain. Residue Gly354 coordinates L-glutamine. Residue Cys381 is the Nucleophile; for glutamine hydrolysis of the active site. Residues 382–385 (LGMQ), Glu405, and Arg462 contribute to the L-glutamine site. Catalysis depends on residues His507 and Glu509.

This sequence belongs to the CTP synthase family. In terms of assembly, homotetramer.

The enzyme catalyses UTP + L-glutamine + ATP + H2O = CTP + L-glutamate + ADP + phosphate + 2 H(+). It catalyses the reaction L-glutamine + H2O = L-glutamate + NH4(+). The catalysed reaction is UTP + NH4(+) + ATP = CTP + ADP + phosphate + 2 H(+). It functions in the pathway pyrimidine metabolism; CTP biosynthesis via de novo pathway; CTP from UDP: step 2/2. Its activity is regulated as follows. Allosterically activated by GTP, when glutamine is the substrate; GTP has no effect on the reaction when ammonia is the substrate. The allosteric effector GTP functions by stabilizing the protein conformation that binds the tetrahedral intermediate(s) formed during glutamine hydrolysis. Inhibited by the product CTP, via allosteric rather than competitive inhibition. Catalyzes the ATP-dependent amination of UTP to CTP with either L-glutamine or ammonia as the source of nitrogen. Regulates intracellular CTP levels through interactions with the four ribonucleotide triphosphates. The chain is CTP synthase from Prochlorococcus marinus (strain MIT 9301).